Here is a 785-residue protein sequence, read N- to C-terminus: Rho-GTPase-activating protein RGD3 (785 aa).

Ser-2 is subject to N-acetylserine. The 433-residue stretch at 31–463 (ISLRNTYWTK…PQETANADVR (433 aa)) folds into the F-BAR domain. The interval 313 to 340 (SNGNAGNRKKKSYGELTHSDNEHEEKSN) is disordered. The span at 329–339 (THSDNEHEEKS) shows a compositional bias: basic and acidic residues. The Rho-GAP domain occupies 520–702 (IILRQIEKEP…TFFINERTVE (183 aa)). Positions 732-785 (TAPIHSTPKPPPNDKDGHFIPRPFKTSSTPTTPERPKRKSGLFLPINVNDVPST) are disordered. Ser-759 is modified (phosphoserine). Residues Thr-760, Thr-762, and Thr-763 each carry the phosphothreonine modification.

Phosphorylation at the C-terminus negatively regulates the activity and the polarized localization.

The protein resides in the cytoplasmic vesicle membrane. The protein localises to the cell membrane. Its subcellular location is the bud tip. It localises to the bud neck. Functionally, GTPase activating protein (GAP) for RHO3 and CDC42 that binds membranes through phosphatidylinositol 4,5-bisphosphate. Plays a key role in cell polarity. Modulates the RHO3 distribution at the plasma membrane and its polarity during growth. This Saccharomyces cerevisiae (strain ATCC 204508 / S288c) (Baker's yeast) protein is Rho-GTPase-activating protein RGD3.